A 238-amino-acid polypeptide reads, in one-letter code: MQHSKSYRKAAAAIDRSKLYTPAEAVKLAKETTSVKFDATVEVAMRLGVDPRKADQMVRGTVNLPHGTGKTARVIVFAAGAKAEEAVAAGADEVGTDELVARIQGGWLEFDAAIATPDQMAKIGRIARILGPRGLMPNPKTGTVTMNVAKAVSDIKGGKIAFRVDKHSNLHLIIGKASFSEAQLVDNYAAVLDEVLRAKPSAAKGKYLKKVTLTTTMGPGVPVDPNVVKNLQEGSAEG.

The protein belongs to the universal ribosomal protein uL1 family. Part of the 50S ribosomal subunit.

Binds directly to 23S rRNA. The L1 stalk is quite mobile in the ribosome, and is involved in E site tRNA release. Its function is as follows. Protein L1 is also a translational repressor protein, it controls the translation of the L11 operon by binding to its mRNA. The protein is Large ribosomal subunit protein uL1 of Salinispora arenicola (strain CNS-205).